We begin with the raw amino-acid sequence, 683 residues long: MLFIFNFLFSPLPTPALICILTFGAAIFLWLITRPQPVLPLLDLNNQSVGIEGGARKGVSQKNNDLTSCCFSDAKTMYEVFQRGLAVSDNGPCLGYRKPNQPYRWLSYKQVSDRAEYLGSCLLHKGYKSSPDQFVGIFAQNRPEWIISELACYTYSMVAVPLYDTLGPEAIVHIVNKADIAMVICDTPQKALVLIGNVEKGFTPSLKVIILMDPFDDDLKQRGEKSGIEILSLYDAENLGKEHFRKPVPPSPEDLSVICFTSGTTGDPKGAMITHQNIVSNAAAFLKCVEHAYEPTPDDVAISYLPLAHMFERIVQAVVYSCGARVGFFQGDIRLLADDMKTLKPTLFPAVPRLLNRIYDKVQNEAKTPLKKFLLKLAVSSKFKELQKGIIRHDSFWDKLIFAKIQDSLGGRVRVIVTGAAPMSTSVMTFFRAAMGCQVYEAYGQTECTGGCTFTLPGDWTSGHVGVPLACNYVKLEDVADMNYFTVNNEGEVCIKGTNVFKGYLKDPEKTQEALDSDGWLHTGDIGRWLPNGTLKIIDRKKNIFKLAQGEYIAPEKIENIYNRSQPVLQIFVHGESLRSSLVGVVVPDTDVLPSFAAKLGVKGSFEELCQNQVVREAILEDLQKIGKESGLKTFEQVKAIFLHPEPFSIENGLLTPTLKAKRGELSKYFRTQIDSLYEHIQD.

The chain crosses the membrane as a helical; Signal-anchor for type III membrane protein span at residues 12-32; that stretch reads LPTPALICILTFGAAIFLWLI. Ile-32 carries the phosphoserine modification. At 33 to 683 the chain is on the cytoplasmic side; it reads TRPQPVLPLL…IDSLYEHIQD (651 aa). Residue Lys-361 is modified to N6-acetyllysine.

The protein belongs to the ATP-dependent AMP-binding enzyme family. It depends on Mg(2+) as a cofactor.

The protein resides in the mitochondrion. Its subcellular location is the endoplasmic reticulum. It is found in the mitochondrion outer membrane. The protein localises to the endoplasmic reticulum membrane. It localises to the cell membrane. The enzyme catalyses a long-chain fatty acid + ATP + CoA = a long-chain fatty acyl-CoA + AMP + diphosphate. The catalysed reaction is (5Z,8Z,11Z,14Z)-eicosatetraenoate + ATP + CoA = (5Z,8Z,11Z,14Z)-eicosatetraenoyl-CoA + AMP + diphosphate. It catalyses the reaction hexadecanoate + ATP + CoA = hexadecanoyl-CoA + AMP + diphosphate. It carries out the reaction (E)-hexadec-2-enoate + ATP + CoA = (2E)-hexadecenoyl-CoA + AMP + diphosphate. The enzyme catalyses 15-hydroxy-(5Z,8Z,11Z,13E)-eicosatetraenoate + ATP + CoA = 15-hydroxy-(5Z,8Z,11Z,13E)-eicosatetraenoyl-CoA + AMP + diphosphate. The catalysed reaction is 12-hydroxy-(5Z,8Z,10E,14Z)-eicosatetraenoate + ATP + CoA = 12-hydroxy-(5Z,8Z,10E,14Z)-eicosatetraenoyl-CoA + AMP + diphosphate. It catalyses the reaction 5-hydroxy-(6E,8Z,11Z,14Z)-eicosatetraenoate + ATP + CoA = 5-hydroxy-(6E,8Z,11Z,14Z)-eicosatetraenoyl-CoA + AMP + diphosphate. It carries out the reaction 14,15-epoxy-(5Z,8Z,11Z)-eicosatrienoate + ATP + CoA = 14,15-epoxy-(5Z,8Z,11Z)-eicosatrienoyl-CoA + AMP + diphosphate. The enzyme catalyses 11,12-epoxy-(5Z,8Z,14Z)-eicosatrienoate + ATP + CoA = 11,12-epoxy-(5Z,8Z,14Z)-eicosatrienoyl-CoA + AMP + diphosphate. The catalysed reaction is (9Z)-octadecenoate + ATP + CoA = (9Z)-octadecenoyl-CoA + AMP + diphosphate. Functionally, catalyzes the conversion of long-chain fatty acids to their active form acyl-CoAs for both synthesis of cellular lipids, and degradation via beta-oxidation. ACSL5 may activate fatty acids from exogenous sources for the synthesis of triacylglycerol destined for intracellular storage. Utilizes a wide range of saturated fatty acids with a preference for C16-C18 unsaturated fatty acids. It was suggested that it may also stimulate fatty acid oxidation. At the villus tip of the crypt-villus axis of the small intestine may sensitize epithelial cells to apoptosis specifically triggered by the death ligand TRAIL. May have a role in the survival of glioma cells. The protein is Long-chain-fatty-acid--CoA ligase 5 of Homo sapiens (Human).